We begin with the raw amino-acid sequence, 254 residues long: MDNLIIGGTEVKSRLFIGTGKYSSNSIIPRILKKSKSQVITIALRRVDITSKEENMLNYINKDCILLPNTSGARNAEEAIRLARIARAAGCGNWIKIEVISDNKYLLPDNYETIKATEVLAKEGFIVLPYMNPDLMDTKRLVNAGAAAVMPLGAPIGTNRGIATKEMIRIIIDEIATPIVVDAGIGKPSQAAEAMEMGADAVLVNTAIASAGNPVLMAEAFGLAVESGRKAFLAKLGQEKLMAEASSPLTGFLR.

Catalysis depends on K96, which acts as the Schiff-base intermediate with DXP. Residues G157, 183–184, and 205–206 contribute to the 1-deoxy-D-xylulose 5-phosphate site; these read AG and NT.

Belongs to the ThiG family. Homotetramer. Forms heterodimers with either ThiH or ThiS.

Its subcellular location is the cytoplasm. The catalysed reaction is [ThiS sulfur-carrier protein]-C-terminal-Gly-aminoethanethioate + 2-iminoacetate + 1-deoxy-D-xylulose 5-phosphate = [ThiS sulfur-carrier protein]-C-terminal Gly-Gly + 2-[(2R,5Z)-2-carboxy-4-methylthiazol-5(2H)-ylidene]ethyl phosphate + 2 H2O + H(+). Its pathway is cofactor biosynthesis; thiamine diphosphate biosynthesis. Its function is as follows. Catalyzes the rearrangement of 1-deoxy-D-xylulose 5-phosphate (DXP) to produce the thiazole phosphate moiety of thiamine. Sulfur is provided by the thiocarboxylate moiety of the carrier protein ThiS. In vitro, sulfur can be provided by H(2)S. The polypeptide is Thiazole synthase (Clostridium kluyveri (strain ATCC 8527 / DSM 555 / NBRC 12016 / NCIMB 10680 / K1)).